Here is a 2334-residue protein sequence, read N- to C-terminus: Centriolin (2334 aa).

The segment at 1-70 is disordered; the sequence is MKKGSERRLS…ESTVPLEPQQ (70 aa). Over residues 21 to 38 the composition is skewed to low complexity; sequence PGPSSLRSSMRSRSLSPL. LRR repeat units lie at residues 126–147, 148–169, 170–191, and 194–215; these read KLEV…DKLL, RLRE…ENMC, NLQK…FAKK, and SLRV…SKLK. The region spanning 228 to 266 is the LRRCT domain; sequence NPVVALPHYLQFIIFHLRSLESLEGQPVTTQDRQEAFER. Coiled coils occupy residues 265–343 and 437–800; these read ERFS…VELT and DLQL…LNHV. Disordered stretches follow at residues 542 to 562 and 751 to 771; these read DSLD…RGKE and SLRD…ENNE. At Ser-832 the chain carries Phosphoserine. Positions 858-1102 form a coiled coil; the sequence is EKEEAQVRER…ITRLRDVLNL (245 aa). 3 disordered regions span residues 1154 to 1198, 1213 to 1245, and 1338 to 1360; these read SKVS…PLPA, KSFS…VPPP, and LKSK…EEVD. Residues 1227–1238 show a composition bias toward acidic residues; that stretch reads SQEESGLDDQEE. Positions 1320 to 2169 form a coiled coil; that stretch reads EHHNLENEVS…MRTLKSEVKD (850 aa). A Phosphoserine modification is found at Ser-1478. The required for centrosome localization stretch occupies residues 1951–2121; that stretch reads MMFQKLQKER…ELVAQDNHER (171 aa). Residues 1988–2334 form a sufficient for interaction with HOOK2 region; the sequence is QKSRLKQLLT…PLEEPNSYRH (347 aa). Residues 2291–2307 show a composition bias toward low complexity; the sequence is TSTSTDSASSPSLPSLV. Positions 2291-2334 are disordered; that stretch reads TSTSTDSASSPSLPSLVEDSQHGHSQSSFQVLQVPLEEPNSYRH.

Interacts with HOOK2. Interacts with EXOC6 and SNAPIN. Associates with the exocyst complex. Highly expressed in liver.

It localises to the cytoplasm. The protein resides in the cytoskeleton. Its subcellular location is the microtubule organizing center. The protein localises to the centrosome. It is found in the midbody. It localises to the midbody ring. In terms of biological role, involved in cell cycle progression and cytokinesis. During the late steps of cytokinesis, anchors exocyst and SNARE complexes at the midbody, thereby allowing secretory vesicle-mediated abscission. This is Centriolin (Cntrl) from Mus musculus (Mouse).